Here is a 323-residue protein sequence, read N- to C-terminus: MGNRVSREEFEWVYTDQPHAARRQEILAKYPEIKSLMKPDPNLIWIVTSMLLVQLASFYLVKDLDWKWLMFWSYAFGSCLNHSMTLAIHEISHNFPFGHHKAMWNRWFGMFANLSLGVPYSISFKRYHMDHHRYLGADGIDVDIPTDFEGWFFCTTLRKLVWVILQPLFYAFRPLFINPKPITHLEVINTVIQVTFDVLVYYVFGVKSLVYMLAASLLGLGLHPISGHFIAEHYMFLKGHETYSYYGPLNLLTFNVGYHNEHHDFPNVPGKNLPLVRKIASEYYDNLPHYNSWIRVLYDFVMDDTISPYSRMKRPPKGNEIQE.

Gly2 carries the N-myristoyl glycine lipid modification. 2 helical membrane-spanning segments follow: residues 41–61 (PNLI…FYLV) and 68–88 (WLMF…TLAI). The short motif at 89–93 (HEISH) is the Histidine box-1 element. A helical transmembrane segment spans residues 104–124 (WNRWFGMFANLSLGVPYSISF). The Histidine box-2 motif lies at 128-132 (HMDHH). 3 helical membrane-spanning segments follow: residues 152 to 172 (FFCT…FYAF), 184 to 204 (HLEV…YYVF), and 210 to 230 (VYML…GHFI). Positions 259-263 (HNEHH) match the Histidine box-3 motif. At Ser307 the chain carries Phosphoserine.

This sequence belongs to the fatty acid desaturase type 1 family. DEGS subfamily. In terms of assembly, interacts with RLBP1; the interaction increases synthesis of chromophore-precursors by DEGS1. Myristoylation can target the enzyme to the mitochondria leading to an increase in ceramide levels.

Its subcellular location is the mitochondrion membrane. It is found in the endoplasmic reticulum membrane. The enzyme catalyses an N-acylsphinganine + 2 Fe(II)-[cytochrome b5] + O2 + 2 H(+) = an N-acylsphing-4-enine + 2 Fe(III)-[cytochrome b5] + 2 H2O. It catalyses the reaction all-trans-retinol = 11-cis-retinol. The catalysed reaction is all-trans-retinol = 9-cis-retinol. It carries out the reaction all-trans-retinol = 13-cis-retinol. The enzyme catalyses 11-cis-retinol = 13-cis-retinol. It catalyses the reaction 11-cis-retinol = 9-cis-retinol. Its function is as follows. Has sphingolipid-delta-4-desaturase activity. Converts D-erythro-sphinganine to D-erythro-sphingosine (E-sphing-4-enine). Catalyzes the equilibrium isomerization of retinols. This is Sphingolipid delta(4)-desaturase DES1 from Rattus norvegicus (Rat).